We begin with the raw amino-acid sequence, 1414 residues long: Phenyloxazoline synthase MbtB (1414 aa).

One can recognise a Carrier 1 domain in the interval 5–78 (TACSEIIRAE…AWSQLVSAGT (74 aa)). Position 39 is an O-(pantetheine 4'-phosphoryl)serine (S39). The interval 96 to 394 (EGEPFPLAPM…SSLLLDVDLT (299 aa)) is condensation/cyclization. An adenylation region spans residues 579-975 (SYAQLRDQAS…RLPGVHAAAA (397 aa)). The Carrier 2 domain maps to 1057–1135 (APRTVLQRAL…ALAQLLTGRE (79 aa)). Residue S1094 is modified to O-(pantetheine 4'-phosphoryl)serine. Positions 1188–1413 (GAVLVFPHAG…AVARMVSADV (226 aa)) are thioesterase.

The protein belongs to the ATP-dependent AMP-binding enzyme family. MbtB subfamily. Pantetheine 4'-phosphate serves as cofactor. In terms of processing, 4'-phosphopantetheine is transferred from CoA to a specific serine in each of the two carrier protein domains, leading to their activation from apo to holo forms.

The protein operates within siderophore biosynthesis; mycobactin biosynthesis. Involved in the initial steps of the mycobactin biosynthetic pathway. Putatively couples activated salicylic acid with serine or threonine and cyclizes this precursor to the hydroxyphenyloxazoline ring system present in this class of siderophores. Essential for growth in macrophages. This is Phenyloxazoline synthase MbtB (mbtB) from Mycobacterium tuberculosis (strain ATCC 25618 / H37Rv).